We begin with the raw amino-acid sequence, 483 residues long: MTALKTEQNIGRITQIIGPVIDAVFSPNKMPNIYNSVVIEGKNDVGDTIKCVAEVQQLLGDNVVRAVSMSATDGLMRGMTVVDTGAALSVPVGKNTLGRIFNVLGEPVDELGAVSTPEGMLPIHRAAPAFVDLDTNLSIFETGIKVVDLLAPYRRGGKIGLFGGAGVGKTVLIMELIVNNNIAKAHGGVSVFAGVGERTREGNDLYQEMCESKVIDTANLANSKVALVYGQMNEPPGARMRVGLTALTMAEYFRDVNNQDVLLFVDNIFRFVQAGSEVSALLGRMPSAVGYQPTLSTEMGSLQERITSTKTGSITSIQAVYVPADDLTDPAPATTFAHLDATTVLSRNLAAKGIYPAVDPLDSTSTMLQPWILGDDHYDTAQGVKQTLQRYKELQDIIAILGLDELSEEDRLTVARARKVERFLSQPFFVAEVFTGSPGKYVSLAESIQGFKMILGGELDDLPEQAFYLVGNIDEAVEKAAKL.

Residue 163 to 170 coordinates ATP; that stretch reads GGAGVGKT.

It belongs to the ATPase alpha/beta chains family. In terms of assembly, F-type ATPases have 2 components, CF(1) - the catalytic core - and CF(0) - the membrane proton channel. CF(1) has five subunits: alpha(3), beta(3), gamma(1), delta(1), epsilon(1). CF(0) has four main subunits: a(1), b(1), b'(1) and c(9-12).

It is found in the plastid. It localises to the chloroplast thylakoid membrane. It carries out the reaction ATP + H2O + 4 H(+)(in) = ADP + phosphate + 5 H(+)(out). Produces ATP from ADP in the presence of a proton gradient across the membrane. The catalytic sites are hosted primarily by the beta subunits. The sequence is that of ATP synthase subunit beta, chloroplastic from Ostreococcus tauri.